Here is a 121-residue protein sequence, read N- to C-terminus: Large ribosomal subunit protein uL14 (121 aa).

It belongs to the universal ribosomal protein uL14 family. Part of the 50S ribosomal subunit. Forms a cluster with proteins L3 and L19. In the 70S ribosome, L14 and L19 interact and together make contacts with the 16S rRNA in bridges B5 and B8.

In terms of biological role, binds to 23S rRNA. Forms part of two intersubunit bridges in the 70S ribosome. The sequence is that of Large ribosomal subunit protein uL14 from Prochlorococcus marinus (strain MIT 9301).